A 295-amino-acid chain; its full sequence is Hepatic leukemia factor (295 aa).

Residues 34 to 52 (LHPEDAFSKDRDKGKKLDD) show a composition bias toward basic and acidic residues. Disordered regions lie at residues 34–69 (LHPEDAFSKDRDKGKKLDDGSNSPTVPQSAFLGPTL) and 93–160 (SENG…NRNT). Residues 225–288 (DDKYWARRRK…GKCKNILAKY (64 aa)) form the bZIP domain. Residues 227-247 (KYWARRRKNNMAAKRSRDARR) are basic motif. Residues 248 to 255 (LKENQIAI) form a leucine-zipper region.

Belongs to the bZIP family. PAR subfamily. Binds DNA specifically as homodimer or heterodimer with other PAR factors. In terms of tissue distribution, isoform HLF43 is abundant in brain, liver and kidney. Isoform HLF36 is expressed only in the liver. Both isoforms accumulate in the liver with different circadian amplitudes. Isoform HLF36 reaches peak expression levels between 8 and 12 p.m. Isoform HLF43 displays a more pronounced fluctuation through the day.

It localises to the nucleus. This is Hepatic leukemia factor (Hlf) from Rattus norvegicus (Rat).